A 504-amino-acid polypeptide reads, in one-letter code: Maturase K (504 aa).

Belongs to the intron maturase 2 family. MatK subfamily.

The protein localises to the plastid. The protein resides in the chloroplast. Its function is as follows. Usually encoded in the trnK tRNA gene intron. Probably assists in splicing its own and other chloroplast group II introns. This is Maturase K from Gossypium barbadense (Sea Island cotton).